The following is a 175-amino-acid chain: Early E1A protein (175 aa).

Residues 40–48 are interaction with RB1 in competition with E2F1; that stretch reads PSLHDLFDL. An LXCXE motif, interaction with host RB1 motif is present at residues 106–110; sequence LLCLE. The segment at 146-164 is a zinc-finger region; it reads CLRCAYYQEQGENSICGLC.

Belongs to the adenoviridae E1A protein family. In terms of assembly, interacts with host UBE2I; this interaction interferes with polySUMOylation. Interacts with host RB1; this interaction induces the aberrant dissociation of RB1-E2F1 complex thereby disrupting the activity of RB1 and activating E2F1-regulated genes. Interacts with host ATF7; the interaction enhances ATF7-mediated viral transactivation activity which requires the zinc binding domains of both proteins. Isoform early E1A 32 kDa protein and isoform early E1A 26 kDa protein interact (via N-terminus) with CUL1 and E3 ubiquitin ligase RBX1; these interactions inhibit RBX1-CUL1-dependent elongation reaction of ubiquitin chains and attenuate ubiquitination of SCF(FBXW7) target proteins. Interacts (via PXLXP motif) with host ZMYND11/BS69 (via MYND-type zinc finger); this interaction inhibits E1A mediated transactivation. Interacts with host EP300; this interaction stimulates the acetylation of RB1 by recruiting EP300 and RB1 into a multimeric-protein complex. Interacts with host CTBP1 and CTBP2; this interaction seems to potentiate viral replication. Interacts with host DCAF7. Interacts with host DYRK1A. Interacts with host KPNA4; this interaction allows E1A import into the host nucleus. Interacts with host EP400; this interaction stabilizes MYC. Interacts with host TBP protein; this interaction probably disrupts the TBP-TATA complex.

It localises to the host nucleus. Its function is as follows. Plays a role in viral genome replication by driving entry of quiescent cells into the cell cycle. Stimulation of progression from G1 to S phase allows the virus to efficiently use the cellular DNA replicating machinery to achieve viral genome replication. E1A protein has both transforming and trans-activating activities. Induces the disassembly of the E2F1 transcription factor from RB1 by direct competition for the same binding site on RB1, with subsequent transcriptional activation of E2F1-regulated S-phase genes and of the E2 region of the adenoviral genome. Release of E2F1 leads to the ARF-mediated inhibition of MDM2 and causes TP53/p53 to accumulate because it is not targeted for degradation by MDM2-mediated ubiquitination anymore. This increase in TP53, in turn, would arrest the cell proliferation and direct its death but this effect is counteracted by the viral protein E1B-55K. Inactivation of the ability of RB1 to arrest the cell cycle is critical for cellular transformation, uncontrolled cellular growth and proliferation induced by viral infection. Interaction with RBX1 and CUL1 inhibits ubiquitination of the proteins targeted by SCF(FBXW7) ubiquitin ligase complex, and may be linked to unregulated host cell proliferation. The tumorigenesis-restraining activity of E1A may be related to the disruption of the host CtBP-CtIP complex through the CtBP binding motif. The chain is Early E1A protein from Canis lupus familiaris (Dog).